The sequence spans 457 residues: Bifunctional F420 biosynthesis protein FbiB (457 aa).

Positions 1–253 (MTSSDSHRSA…NGPDDLFWLG (253 aa)) are coenzyme F420:L-glutamate ligase. GTP contacts are provided by residues 29–32 (LPEF), Ser-59, and Lys-64. Asp-118 contacts a divalent metal cation. Asn-121 is a binding site for GTP. Positions 159 and 160 each coordinate a divalent metal cation. The interval 254 to 457 (TTEALELGRQ…VRVADLLLRK (204 aa)) is dehydro-coenzyme F420-0 reductase. FMN contacts are provided by residues 269-273 (RRSVR) and Ala-297. Asp-329 serves as a coordination point for coenzyme F420-(gamma-Glu)n. FMN-binding residues include Gly-408 and Arg-445.

It in the N-terminal section; belongs to the CofE family. Mg(2+) is required as a cofactor. Requires Mn(2+) as cofactor. K(+) serves as cofactor.

It catalyses the reaction oxidized coenzyme F420-0 + GTP + L-glutamate = oxidized coenzyme F420-1 + GDP + phosphate + H(+). The enzyme catalyses oxidized coenzyme F420-1 + GTP + L-glutamate = oxidized coenzyme F420-2 + GDP + phosphate + H(+). The catalysed reaction is oxidized coenzyme F420-(gamma-L-Glu)(n) + GTP + L-glutamate = oxidized coenzyme F420-(gamma-L-Glu)(n+1) + GDP + phosphate + H(+). It carries out the reaction oxidized coenzyme F420-0 + FMN + H(+) = dehydro coenzyme F420-0 + FMNH2. Its pathway is cofactor biosynthesis; coenzyme F420 biosynthesis. Functionally, bifunctional enzyme that catalyzes the GTP-dependent successive addition of multiple gamma-linked L-glutamates to the L-lactyl phosphodiester of 7,8-didemethyl-8-hydroxy-5-deazariboflavin (F420-0) to form polyglutamated F420 derivatives, and the FMNH2-dependent reduction of dehydro-F420-0 to form F420-0. In Mycobacterium leprae (strain TN), this protein is Bifunctional F420 biosynthesis protein FbiB.